The following is a 102-amino-acid chain: MYAIIETGGKQIKVEEGQEIYIEKIDAQEGETVTFDKVLFVGGETVKIGNPTVEGATVTAKVQKHGRQKKIIVFKYKAKKNYRRKQGHRQPYTKVVIEKINA.

The protein belongs to the bacterial ribosomal protein bL21 family. As to quaternary structure, part of the 50S ribosomal subunit. Contacts protein L20.

In terms of biological role, this protein binds to 23S rRNA in the presence of protein L20. The chain is Large ribosomal subunit protein bL21 from Geobacillus sp. (strain WCH70).